The following is a 161-amino-acid chain: Shikimate kinase (161 aa).

10–15 (GAGKTT) contributes to the ATP binding site. Threonine 14 lines the Mg(2+) pocket. Substrate-binding residues include aspartate 28, arginine 52, and glycine 74. Arginine 114 serves as a coordination point for ATP. Arginine 132 contributes to the substrate binding site.

This sequence belongs to the shikimate kinase family. As to quaternary structure, monomer. The cofactor is Mg(2+).

The protein localises to the cytoplasm. The catalysed reaction is shikimate + ATP = 3-phosphoshikimate + ADP + H(+). It functions in the pathway metabolic intermediate biosynthesis; chorismate biosynthesis; chorismate from D-erythrose 4-phosphate and phosphoenolpyruvate: step 5/7. In terms of biological role, catalyzes the specific phosphorylation of the 3-hydroxyl group of shikimic acid using ATP as a cosubstrate. The protein is Shikimate kinase of Streptococcus gordonii (strain Challis / ATCC 35105 / BCRC 15272 / CH1 / DL1 / V288).